We begin with the raw amino-acid sequence, 1116 residues long: Anillin (1116 aa).

Basic and acidic residues-rich tracts occupy residues 1 to 25 (MDPFTEKLLERTRARRENLQKKMAD) and 85 to 94 (KQPKTPELPK). Disordered stretches follow at residues 1-188 (MDPF…PVGR), 205-257 (DLSH…PKDT), 304-363 (KPNE…KVAT), and 443-522 (NVWT…PRLV). The span at 101-119 (ASHQQLRATNQTPQVSLLS) shows a compositional bias: polar residues. Positions 120–133 (SDKELTASDVKDAS) are enriched in basic and acidic residues. An interactions with myh9 and myh10 region spans residues 142 to 254 (LADQRRYWDN…QDTTSCSQRP (113 aa)). The segment covering 226-242 (SKESTTSSASASMNSHS) has biased composition (low complexity). The interaction with F-actin stretch occupies residues 255–418 (KDTTVNKAVC…LKQNDISSTA (164 aa)). Composition is skewed to polar residues over residues 304-326 (KPNENVLPASSSLKPVSANSSPQ) and 336-356 (YSYQSASARNELNNNTPVQTQ). The stretch at 416–443 (STASLAQQQKKEREKELAALRGRYDRRN) forms a coiled coil. Residues 453–472 (QGTFPETSSNLPTSDVASCS) show a composition bias toward polar residues. Positions 975-1099 (SVEDKGFLTM…WMQKLNQFLV (125 aa)) constitute a PH domain.

Interacts with and bundles F-actin. Interacts with the non-muscle myosin II heavy chains myh9 and myh10, and these interactions may be enhanced by the phosphorylation of myosin II regulatory light chain by mylk.

The protein localises to the nucleus. Its subcellular location is the cytoplasm. The protein resides in the cytoskeleton. It is found in the cell cortex. It localises to the cell projection. The protein localises to the bleb. Its function is as follows. Required for cytokinesis. Essential for the structural integrity of the cleavage furrow and for completion of cleavage furrow ingression. Plays a role in bleb assembly during metaphase and anaphase of mitosis. May play a significant role in podocyte cell migration. This is Anillin (anln) from Xenopus laevis (African clawed frog).